A 417-amino-acid polypeptide reads, in one-letter code: Probable dihydrofolate synthetase (417 aa).

34–37 (GKGS) serves as a coordination point for ATP. Residues Ser-58, Glu-123, and His-151 each coordinate Mg(2+). ATP-binding residues include Arg-274 and Asp-289.

This sequence belongs to the folylpolyglutamate synthase family.

It carries out the reaction 7,8-dihydropteroate + L-glutamate + ATP = 7,8-dihydrofolate + ADP + phosphate + H(+). The protein operates within cofactor biosynthesis; tetrahydrofolylpolyglutamate biosynthesis. In terms of biological role, glutamate-adding enzyme which catalyzes the binding of the first glutamyl side chain to dihydropteroate. Leads to the de nove synthesis of tetrahydrofolate. de novo. The sequence is that of Probable dihydrofolate synthetase (fol3) from Schizosaccharomyces pombe (strain 972 / ATCC 24843) (Fission yeast).